Here is a 426-residue protein sequence, read N- to C-terminus: Histidine--tRNA ligase (426 aa).

It belongs to the class-II aminoacyl-tRNA synthetase family. Homodimer.

It is found in the cytoplasm. The catalysed reaction is tRNA(His) + L-histidine + ATP = L-histidyl-tRNA(His) + AMP + diphosphate + H(+). The sequence is that of Histidine--tRNA ligase from Legionella pneumophila (strain Paris).